Consider the following 385-residue polypeptide: Multidrug resistance protein MdtE (385 aa).

The N-terminal stretch at 1 to 20 (MNRRRKLLIPLLFCGAMLTA) is a signal peptide. The N-palmitoyl cysteine moiety is linked to residue cysteine 21. Cysteine 21 is lipidated: S-diacylglycerol cysteine.

This sequence belongs to the membrane fusion protein (MFP) (TC 8.A.1) family. As to quaternary structure, homotrimer. Part of the tripartite efflux system MdtEF-TolC, which is composed of an inner membrane transporter, MdtF, a membrane fusion protein, MdtE, and an outer membrane component, TolC. The complex forms a large protein conduit and can translocate molecules across both the inner and outer membranes.

It is found in the cell inner membrane. Part of the tripartite efflux system MdtEF-TolC, which confers resistance to various compounds. This Escherichia coli O6:H1 (strain CFT073 / ATCC 700928 / UPEC) protein is Multidrug resistance protein MdtE (mdtE).